A 107-amino-acid chain; its full sequence is MKIKKGDLVQVITGKDKGKQGKVIAAFPREDRVLVEGVNRVKKHTKAGPTARGSQAGGIVTTEAPIHVSNVQLVVEKDGNKVVTRVGYRFDDEGNKVRVAKRTGEDI.

Belongs to the universal ribosomal protein uL24 family. As to quaternary structure, part of the 50S ribosomal subunit.

One of two assembly initiator proteins, it binds directly to the 5'-end of the 23S rRNA, where it nucleates assembly of the 50S subunit. In terms of biological role, one of the proteins that surrounds the polypeptide exit tunnel on the outside of the subunit. In Streptomyces coelicolor (strain ATCC BAA-471 / A3(2) / M145), this protein is Large ribosomal subunit protein uL24.